A 413-amino-acid chain; its full sequence is Extracellular sucrase (413 aa).

D44 (nucleophile) is an active-site residue. The Proton donor/acceptor role is filled by E276.

It belongs to the glycosyl hydrolase 68 family.

The protein localises to the secreted. It catalyses the reaction Hydrolysis of terminal non-reducing beta-D-fructofuranoside residues in beta-D-fructofuranosides.. In Zymomonas mobilis subsp. mobilis (strain ATCC 10988 / DSM 424 / LMG 404 / NCIMB 8938 / NRRL B-806 / ZM1), this protein is Extracellular sucrase (sacC).